The following is a 135-amino-acid chain: Large ribosomal subunit protein bL19 (135 aa).

The protein belongs to the bacterial ribosomal protein bL19 family.

This protein is located at the 30S-50S ribosomal subunit interface and may play a role in the structure and function of the aminoacyl-tRNA binding site. The sequence is that of Large ribosomal subunit protein bL19 from Protochlamydia amoebophila (strain UWE25).